The following is a 39-amino-acid chain: MIEPLLCGIVLGLVPITLLGLFVAAWNQYRRGSAIPDWE.

Residues 5-25 (LLCGIVLGLVPITLLGLFVAA) form a helical membrane-spanning segment.

It belongs to the PetG family. The 4 large subunits of the cytochrome b6-f complex are cytochrome b6, subunit IV (17 kDa polypeptide, PetD), cytochrome f and the Rieske protein, while the 4 small subunits are PetG, PetL, PetM and PetN. The complex functions as a dimer.

The protein localises to the cellular thylakoid membrane. Functionally, component of the cytochrome b6-f complex, which mediates electron transfer between photosystem II (PSII) and photosystem I (PSI), cyclic electron flow around PSI, and state transitions. PetG is required for either the stability or assembly of the cytochrome b6-f complex. This Prochlorococcus marinus (strain SARG / CCMP1375 / SS120) protein is Cytochrome b6-f complex subunit 5.